Here is a 330-residue protein sequence, read N- to C-terminus: 4,5-dihydroxyphthalate decarboxylase (330 aa).

The protein to P.putida DHP decarboxylase.

It carries out the reaction 4,5-dihydroxyphthalate + H(+) = 3,4-dihydroxybenzoate + CO2. It participates in xenobiotic degradation; phthalate degradation; 3,4-dihydroxybenzoate from phthalate: step 3/3. The protein is 4,5-dihydroxyphthalate decarboxylase (phtD) of Comamonas testosteroni (Pseudomonas testosteroni).